A 463-amino-acid chain; its full sequence is GTPase Der (463 aa).

2 EngA-type G domains span residues 27-190 (PVVA…PEVG) and 200-373 (RRVA…ASWD). Residues 33–40 (GRPNVGKS), 80–84 (DTGGW), 142–145 (NKVD), 206–213 (GKPNVGKS), 253–257 (DTAGL), and 318–321 (NKWD) contribute to the GTP site. Residues 374–456 (TRIATGPLNT…PIRVNVRVRE (83 aa)) enclose the KH-like domain.

The protein belongs to the TRAFAC class TrmE-Era-EngA-EngB-Septin-like GTPase superfamily. EngA (Der) GTPase family. In terms of assembly, associates with the 50S ribosomal subunit.

Its function is as follows. GTPase that plays an essential role in the late steps of ribosome biogenesis. In Mycobacterium bovis (strain ATCC BAA-935 / AF2122/97), this protein is GTPase Der.